A 1450-amino-acid polypeptide reads, in one-letter code: DNA-directed RNA polymerase RPB1 homolog (1450 aa).

The protein belongs to the RNA polymerase beta' chain family. Part of the viral DNA-directed RNA polymerase that consists of 8 polII-like subunits (RPB1, RPB2, RPB3, RPB5, RPB6, RPB7, RPB9, RPB10), a capping enzyme and a termination factor.

It localises to the virion. The catalysed reaction is RNA(n) + a ribonucleoside 5'-triphosphate = RNA(n+1) + diphosphate. Functionally, catalytic component of the DNA-directed RNA polymerase (RNAP) that catalyzes the transcription in the cytoplasm of viral DNA into RNA using the four ribonucleoside triphosphates as substrates. Forms the polymerase active center together with RPB2. Part of the core element with the central large cleft, the clamp element that moves to open and close the cleft and the jaws that are thought to grab the incoming DNA template. This chain is DNA-directed RNA polymerase RPB1 homolog, found in Ornithodoros (relapsing fever ticks).